The following is a 71-amino-acid chain: Translation initiation factor IF-1 (71 aa).

One can recognise an S1-like domain in the interval 1–71 (MSKDDLIQFT…LTKGRVIHRH (71 aa)).

It belongs to the IF-1 family. As to quaternary structure, component of the 30S ribosomal translation pre-initiation complex which assembles on the 30S ribosome in the order IF-2 and IF-3, IF-1 and N-formylmethionyl-tRNA(fMet); mRNA recruitment can occur at any time during PIC assembly.

It localises to the cytoplasm. Its function is as follows. One of the essential components for the initiation of protein synthesis. Stabilizes the binding of IF-2 and IF-3 on the 30S subunit to which N-formylmethionyl-tRNA(fMet) subsequently binds. Helps modulate mRNA selection, yielding the 30S pre-initiation complex (PIC). Upon addition of the 50S ribosomal subunit IF-1, IF-2 and IF-3 are released leaving the mature 70S translation initiation complex. This is Translation initiation factor IF-1 from Rickettsia conorii (strain ATCC VR-613 / Malish 7).